The primary structure comprises 327 residues: Undecaprenyl-phosphate 4-deoxy-4-formamido-L-arabinose transferase (327 aa).

The Cytoplasmic segment spans residues 1 to 235 (MFDAAPIKKV…TCLTTTPLRL (235 aa)). The helical transmembrane segment at 236-256 (LSLLGSVIAIGGFSLSVLLIV) threads the bilayer. The Periplasmic portion of the chain corresponds to 257–269 (LRLALGPQWAAEG). A helical membrane pass occupies residues 270–290 (VFMLFAVLFTFIGAQFIGMGL). Residues 291-327 (LGEYIGRIYNDVRARPRYFVQQVIYPESTPFTEESHQ) are Cytoplasmic-facing.

This sequence belongs to the glycosyltransferase 2 family.

It is found in the cell inner membrane. The catalysed reaction is UDP-4-deoxy-4-formamido-beta-L-arabinose + di-trans,octa-cis-undecaprenyl phosphate = 4-deoxy-4-formamido-alpha-L-arabinopyranosyl di-trans,octa-cis-undecaprenyl phosphate + UDP. It functions in the pathway glycolipid biosynthesis; 4-amino-4-deoxy-alpha-L-arabinose undecaprenyl phosphate biosynthesis; 4-amino-4-deoxy-alpha-L-arabinose undecaprenyl phosphate from UDP-4-deoxy-4-formamido-beta-L-arabinose and undecaprenyl phosphate: step 1/2. It participates in bacterial outer membrane biogenesis; lipopolysaccharide biosynthesis. Functionally, catalyzes the transfer of 4-deoxy-4-formamido-L-arabinose from UDP to undecaprenyl phosphate. The modified arabinose is attached to lipid A and is required for resistance to polymyxin and cationic antimicrobial peptides. This chain is Undecaprenyl-phosphate 4-deoxy-4-formamido-L-arabinose transferase, found in Salmonella choleraesuis (strain SC-B67).